The primary structure comprises 658 residues: Palmitoyltransferase ZDHHC5-B (658 aa).

The Cytoplasmic portion of the chain corresponds to 1–24 (MPVGLSVGGALGDPSPSRPFRPSR). The helical transmembrane segment at 25–45 (YVPVSAATAFLVGATTLFLCF) threads the bilayer. Topologically, residues 46–56 (TCPWLSEKFSS) are extracellular. Residues 57 to 77 (FIPLYNVVVFLFTLANFCMAT) traverse the membrane as a helical segment. The Cytoplasmic portion of the chain corresponds to 78–159 (FMDPGVFPRA…NCIGRRNYRY (82 aa)). One can recognise a DHHC domain in the interval 115 to 165 (KWCSTCRFYRPPRCSHCSVCDNCVEEFDHHCPWVNNCIGRRNYRYFFLFLL). Cys145 (S-palmitoyl cysteine intermediate) is an active-site residue. A helical transmembrane segment spans residues 160-180 (FFLFLLSLTVHIMDVFGFSLL). At 181–202 (YILHHTKQLDLVQSGVTMAVMC) the chain is on the extracellular side. A helical transmembrane segment spans residues 203–223 (VAGLFFVPVAGLTGFHVVLVA). Residues 224 to 658 (RGRTTNEQVT…VGGTTYEISV (435 aa)) are Cytoplasmic-facing. Disordered stretches follow at residues 306–419 (EIME…RSGS), 490–522 (ESLL…LSTA), and 540–658 (QREG…EISV). Over residues 360-398 (PGKNHTASTHSSKMSRGNSMTESPSVPVTTGQPSYRSDP) the composition is skewed to polar residues. Residues 407–419 (GCRGGAEGGRSGS) show a composition bias toward gly residues. Pro residues predominate over residues 565–575 (SSPPSRAPPLS). Polar residues predominate over residues 619–633 (SMPNSTIKQNVANHN). Residues 634–644 (THSHKPARGVK) are compositionally biased toward basic residues.

This sequence belongs to the DHHC palmitoyltransferase family. ERF2/ZDHHC9 subfamily.

The protein localises to the cell membrane. It carries out the reaction L-cysteinyl-[protein] + hexadecanoyl-CoA = S-hexadecanoyl-L-cysteinyl-[protein] + CoA. In terms of biological role, palmitoyltransferase that catalyzes the addition of palmitate onto various protein substrates and is involved in a variety of cellular processes. This Danio rerio (Zebrafish) protein is Palmitoyltransferase ZDHHC5-B.